Here is a 250-residue protein sequence, read N- to C-terminus: Putative HTH-type transcriptional regulatory protein PAE1627 (250 aa).

Residues 129–183 (LRAKRQQAGLSLGTLATNLGVTRETVYRYERGEIEAPLKIAEKLINMFGEDITKK) enclose the HTH cro/C1-type domain. The segment at residues 140–159 (LGTLATNLGVTRETVYRYER) is a DNA-binding region (H-T-H motif).

This chain is Putative HTH-type transcriptional regulatory protein PAE1627, found in Pyrobaculum aerophilum (strain ATCC 51768 / DSM 7523 / JCM 9630 / CIP 104966 / NBRC 100827 / IM2).